A 274-amino-acid chain; its full sequence is Large ribosomal subunit protein uL2 (274 aa).

Positions arginine 221–lysine 274 are disordered.

This sequence belongs to the universal ribosomal protein uL2 family. As to quaternary structure, part of the 50S ribosomal subunit. Forms a bridge to the 30S subunit in the 70S ribosome.

Functionally, one of the primary rRNA binding proteins. Required for association of the 30S and 50S subunits to form the 70S ribosome, for tRNA binding and peptide bond formation. It has been suggested to have peptidyltransferase activity; this is somewhat controversial. Makes several contacts with the 16S rRNA in the 70S ribosome. The polypeptide is Large ribosomal subunit protein uL2 (Hamiltonella defensa subsp. Acyrthosiphon pisum (strain 5AT)).